The sequence spans 264 residues: Ribonuclease HII (264 aa).

Residues 69 to 263 (KVVCGIDEVG…EENAKTITKP (195 aa)) form the RNase H type-2 domain. Asp-75, Glu-76, and Asp-166 together coordinate a divalent metal cation.

Belongs to the RNase HII family. Requires Mn(2+) as cofactor. Mg(2+) is required as a cofactor.

It is found in the cytoplasm. The enzyme catalyses Endonucleolytic cleavage to 5'-phosphomonoester.. In terms of biological role, endonuclease that specifically degrades the RNA of RNA-DNA hybrids. In Macrococcus caseolyticus (strain JCSC5402) (Macrococcoides caseolyticum), this protein is Ribonuclease HII.